The chain runs to 264 residues: ATP synthase subunit a (264 aa).

The next 6 membrane-spanning stretches (helical) occupy residues 29 to 49, 89 to 109, 134 to 154, 177 to 197, 208 to 228, and 235 to 255; these read TWHI…LWLF, VIAP…FMDM, DLNI…YYSI, IPVN…SLAL, LIFI…TLGV, and LIFH…LTIV.

It belongs to the ATPase A chain family. In terms of assembly, F-type ATPases have 2 components, CF(1) - the catalytic core - and CF(0) - the membrane proton channel. CF(1) has five subunits: alpha(3), beta(3), gamma(1), delta(1), epsilon(1). CF(0) has three main subunits: a(1), b(2) and c(9-12). The alpha and beta chains form an alternating ring which encloses part of the gamma chain. CF(1) is attached to CF(0) by a central stalk formed by the gamma and epsilon chains, while a peripheral stalk is formed by the delta and b chains.

It is found in the cell inner membrane. In terms of biological role, key component of the proton channel; it plays a direct role in the translocation of protons across the membrane. This Shewanella woodyi (strain ATCC 51908 / MS32) protein is ATP synthase subunit a.